The following is a 301-amino-acid chain: G-protein coupled receptor homolog U51 (301 aa).

Topologically, residues 1–15 (MEKETKSLAWPATAE) are extracellular. Residues 16–36 (FYGWVFIFSSIQLCTVVFLTV) form a helical membrane-spanning segment. The Cytoplasmic portion of the chain corresponds to 37-48 (RFNGFKVGREYA). The helical transmembrane segment at 49 to 69 (VFTFAGMSFNCFLLPIKMGLL) threads the bilayer. The Extracellular segment spans residues 70-82 (SGHWTLPRDFCAI). A helical membrane pass occupies residues 83–103 (LLYIDDFSAYFSSWSLVFMAI). Residues 104-122 (ERINYFCYSTPLLNENSKA) are Cytoplasmic-facing. A helical transmembrane segment spans residues 123–143 (LAKVCFPIVWVVSGVQALQML). The Extracellular portion of the chain corresponds to 144 to 168 (NNYKATALQNETGQCFLAFLRSGHD). Asn153 carries an N-linked (GlcNAc...) asparagine; by host glycan. A helical membrane pass occupies residues 169 to 189 (MWLMLVYSVVIPVMLVFFYLY). Topologically, residues 190–199 (SKNFMLLKDE) are cytoplasmic. The helical transmembrane segment at 200–220 (LSSVTTYLCIYLLLGTIAHLP) threads the bilayer. Topologically, residues 221–238 (KAALSEIESDKIFYGLRD) are extracellular. Residues 239–259 (IFMALPVLKVYYISAMAYCMA) form a helical membrane-spanning segment. Topologically, residues 260–301 (CDDHTVPVRLCSIWLVNLCKKCFSCTRREKGSDLEVGIKMLK) are cytoplasmic.

The protein belongs to the G-protein coupled receptor 1 family.

It localises to the host cell membrane. This Homo sapiens (Human) protein is G-protein coupled receptor homolog U51 (U51).